The sequence spans 256 residues: Probable sulfite/organosulfonate exporter TauE (256 aa).

A run of 8 helical transmembrane segments spans residues 5–25 (LLLP…FQTV), 33–53 (IVMG…AAVV), 76–96 (AVAA…LVLE), 103–123 (ATLL…SAAL), 142–162 (VFGG…IFQF), 172–190 (IRCA…RTLF), 199–219 (AAVC…TLLG), and 236–256 (FGVL…AWVL).

This sequence belongs to the 4-toluene sulfonate uptake permease (TSUP) (TC 2.A.102) family.

It localises to the cell inner membrane. Could be a sulfite/organosulfonate exporter with a wide substrate range, including 3-sulfolactate and 3-sulfopyruvate. This Cupriavidus necator (strain ATCC 17699 / DSM 428 / KCTC 22496 / NCIMB 10442 / H16 / Stanier 337) (Ralstonia eutropha) protein is Probable sulfite/organosulfonate exporter TauE.